The sequence spans 448 residues: Beclin-1 (448 aa).

An N-acetylmethionine modification is found at Met1. A phosphoserine mark is found at Ser14 and Ser29. Phosphoserine; by AMPK occurs at positions 88, 91, and 94. The short motif at 106-125 is the BH3 element; that stretch reads TMENLSRRLKVTGDLFDIMS. The tract at residues 110–157 is interaction with BCL2 and BCL2L1; sequence LSRRLKVTGDLFDIMSGQTDVDHPLCEECTDTLLDQLDTQLNVTENEC. Residue Thr117 is modified to Phosphothreonine; by DAPK1. The stretch at 140-267 forms a coiled coil; the sequence is DTLLDQLDTQ…QLDKLKKTNV (128 aa). The evolutionary conserved domain (ECD) stretch occupies residues 243-448; that stretch reads DELKSVENQM…AWVSSQFYNK (206 aa). Glycyl lysine isopeptide (Lys-Gly) (interchain with G-Cter in ubiquitin) cross-links involve residues Lys400 and Lys435. The tract at residues 423–448 is required for membrane-association; the sequence is WTKALKFMLTNLKWGLAWVSSQFYNK.

The protein belongs to the beclin family. As to quaternary structure, a homodimeric form is proposed to exist; this metastable form readily transits to ATG14- or UVRAG-containing complexes with BECN1:UVRAG being more stable than BECN1:ATG14. Component of the PI3K (PI3KC3/PI3K-III/class III phosphatidylinositol 3-kinase) complex the core of which is composed of the catalytic subunit PIK3C3, the regulatory subunit PIK3R4 and BECN1 associating with additional regulatory/auxiliary subunits to form alternative complex forms. Alternative complex forms containing a fourth regulatory subunit in a mutually exclusive manner are PI3K complex I (PI3KC3-C1) containing ATG14, and PI3K complex II (PI3KC3-C2) containing UVRAG. PI3KC3-C1 displays a V-shaped architecture with PIK3R4 serving as a bridge between PIK3C3 and the ATG14:BECN1 subcomplex. Both, PI3KC3-C1 and PI3KC3-C2, can associate with further regulatory subunits, such as RUBCN, SH3GLB1/Bif-1 and AMBRA1. PI3KC3-C1 probably associates with PIK3CB. Forms a complex with PPP2CA and AMBRA1; AMBRA1 and BECN1 components of the complex regulate MYC stability via different pathways. Component of the complex, at least composed of LRPPRC, BECN1 and BCL2; the interactions prevent BECN1 from forming an autophagy-inducing complex with PIK3C3. Interacts with AMBRA1, GOPC, GRID2. Interacts with BCL2 and BCL2L1 isoform Bcl-X(L); the interaction inhibits BECN1 function in promoting autophagy by interfering with the formation of the PI3K complex. Interacts with cytosolic HMGB1; inhibits the interaction of BECN1 and BCL2 leading to promotion of autophagy. Interacts with USP10, USP13, VMP1, DAPK1, RAB39A. Interacts with the poly-Gln domain of ATXN3; the interaction causes deubiquitination at Lys-400 and stabilizes BECN1. Interacts with SLAMF1. Interacts with TRIM5; the interaction causes activation of BECN1 by causing its dissociation from its inhibitors BCL2 and TAB2. Interacts with active ULK1 (phosphorylated on 'Ser-317') and MEFV simultaneously. Interacts with WDR81 and WDR91; negatively regulates the PI3 kinase/PI3K activity associated with endosomal membranes. Interacts with LAPTM4B; competes with EGFR for LAPTM4B binding; regulates EGFR activity. Interacts with TRIM50. Interacts with TRIM16. Interacts with ATG14; this interaction is increased in the absence of TMEM39A. Interacts with WASHC1; preventing interaction with AMBRA1 and the DCX(AMBRA1) complex and subsequent ubiquitination. Interacts with TRIM17. Interacts with BCL2L10/BCL-B (via BH1 domain). Interacts with SH3BGRL. Interacts with IRGM; enhancing BECN1-interacting partners and influencing the composition of the BECN1 complex. Interacts with ARMC3. Interacts with LRPPRC. (Microbial infection) Interacts with African swine fever virus (ASFV) apoptosis regulator Bcl-2 homolog; this interaction allows the virus to inhibit BECN1, and thus autophagy. In terms of processing, phosphorylation at Thr-117 by DAPK1 reduces its interaction with BCL2 and BCL2L1 and promotes induction of autophagy. In response to autophagic stimuli, phosphorylated at serine residues by AMPK in an ATG14-dependent manner, and this phosphorylation is critical for maximally efficient autophagy. Polyubiquitinated by NEDD4, both with 'Lys-11'- and 'Lys-63'-linkages. 'Lys-11'-linked polyubiquitination leads to degradation and is enhanced when the stabilizing interaction partner VPS34 is depleted. Deubiquitinated by USP10 and USP13, leading to stabilize the PIK3C3/VPS34-containing complexes. Polyubiquitinated at Lys-400 with 'Lys-48'-linkages. 'Lys-48'-linked polyubiquitination of Lys-400 leads to degradation. Deubiquitinated by ATXN3, leading to stabilization. Ubiquitinated at Lys-435 via 'Lys-63'-linkage by the DCX(AMBRA1) complex, thereby increasing the association between BECN1 and PIK3C3 to promote PIK3C3 activity. 'Lys-48'-linked ubiquitination by RNF216 leads to proteasomal degradation and autophagy inhibition. Post-translationally, proteolytically processed by caspases including CASP8 and CASP3; the C-terminal fragments lack autophagy-inducing capacity and are proposed to induce apoptosis. Thus the cleavage is proposed to be an determinant to switch from autophagy to apoptosis pathways affecting cellular homeostasis including viral infections and survival of tumor cells.

The protein resides in the cytoplasm. It is found in the golgi apparatus. It localises to the trans-Golgi network membrane. The protein localises to the endosome membrane. Its subcellular location is the endoplasmic reticulum membrane. The protein resides in the mitochondrion membrane. It is found in the cytoplasmic vesicle. It localises to the autophagosome. The protein localises to the mitochondrion. Its subcellular location is the nucleus. In terms of biological role, plays a central role in autophagy. Acts as a core subunit of the PI3K complex that mediates formation of phosphatidylinositol 3-phosphate; different complex forms are believed to play a role in multiple membrane trafficking pathways: PI3KC3-C1 is involved in initiation of autophagosomes and PI3KC3-C2 in maturation of autophagosomes and endocytosis. Involved in regulation of degradative endocytic trafficking and required for the abscission step in cytokinesis, probably in the context of PI3KC3-C2. Essential for the formation of PI3KC3-C2 but not PI3KC3-C1 PI3K complex forms. Involved in endocytosis. May play a role in antiviral host defense. Functionally, beclin-1-C 35 kDa localized to mitochondria can promote apoptosis; it induces the mitochondrial translocation of BAX and the release of proapoptotic factors. The chain is Beclin-1 (BECN1) from Sus scrofa (Pig).